Reading from the N-terminus, the 244-residue chain is MGNKNIKPSKENRLSILSKDKMDSFKRGSWATSSFREKSRATIQRFSSLRREHIKVDHPDKFLELKRGIYEIIQKSSSIDVDKRTKLMSNIKTMMINPFMIEGLMTSLENLDPDNKMSYSSVMILGEFDIINISDNEAAFEFINSLLKSLLLLNTRQLKLLEYSISNDLLYAHINALEYIIKNTFNVPERQLILRGQYLTPIFSDLLKYAGLTIKSNILMWNKQFIKPVSDLYTSIRLLYCVTV.

The protein belongs to the orthopoxvirus A47 protein family.

This chain is Protein A47, found in Homo sapiens (Human).